The sequence spans 324 residues: tRNA N6-adenosine threonylcarbamoyltransferase (324 aa).

Positions 107, 111, and 127 each coordinate Fe cation. Substrate contacts are provided by residues 127-131, D159, G172, E176, and N257; that span reads YVSGG. D285 is a binding site for Fe cation.

The protein belongs to the KAE1 / TsaD family. Monomer. Component of the KEOPS complex that consists of Kae1, Bud32, Cgi121 and Pcc1; the whole complex dimerizes. Fe(2+) is required as a cofactor.

It is found in the cytoplasm. The enzyme catalyses L-threonylcarbamoyladenylate + adenosine(37) in tRNA = N(6)-L-threonylcarbamoyladenosine(37) in tRNA + AMP + H(+). In terms of biological role, required for the formation of a threonylcarbamoyl group on adenosine at position 37 (t(6)A37) in tRNAs that read codons beginning with adenine. Is a component of the KEOPS complex that is probably involved in the transfer of the threonylcarbamoyl moiety of threonylcarbamoyl-AMP (TC-AMP) to the N6 group of A37. Kae1 likely plays a direct catalytic role in this reaction, but requires other protein(s) of the complex to fulfill this activity. This is tRNA N6-adenosine threonylcarbamoyltransferase from Pyrococcus furiosus (strain ATCC 43587 / DSM 3638 / JCM 8422 / Vc1).